A 410-amino-acid polypeptide reads, in one-letter code: Peptidase T (410 aa).

His79 provides a ligand contact to Zn(2+). Residue Asp81 is part of the active site. Asp142 contacts Zn(2+). Glu176 acts as the Proton acceptor in catalysis. 3 residues coordinate Zn(2+): Glu177, Asp199, and His381.

This sequence belongs to the peptidase M20B family. Zn(2+) serves as cofactor.

Its subcellular location is the cytoplasm. The catalysed reaction is Release of the N-terminal residue from a tripeptide.. Cleaves the N-terminal amino acid of tripeptides. This Listeria monocytogenes serotype 4b (strain F2365) protein is Peptidase T.